Here is a 67-residue protein sequence, read N- to C-terminus: MRILYLLLSVLFVVLQGVAGQPYFSSPIHACRYQRGVCIPGPCRWPYYRVGSCGSGLKSCCVRNRWA.

The signal sequence occupies residues 1 to 19; sequence MRILYLLLSVLFVVLQGVA. Residues 20 to 25 constitute a propeptide that is removed on maturation; the sequence is GQPYFS. 3 disulfide bridges follow: Cys-31–Cys-60, Cys-38–Cys-53, and Cys-43–Cys-61.

Belongs to the beta-defensin family. Expressed in bone marrow, testis, ovary, lung and trachea. Expressed in the ovarian stroma, but not in the ovarian follicles.

Its subcellular location is the secreted. It is found in the cytoplasmic granule. In terms of biological role, has bactericidal activity. Potent activity against S.typhimurium and S.entiriditis. This is Gallinacin-6 (GAL6) from Gallus gallus (Chicken).